The sequence spans 420 residues: Protein maelstrom homolog (420 aa).

A DNA-binding region (HMG box) is located at residues 4–73 (RRASRNAYYF…AQGKDSGPSE (70 aa)). Disordered stretches follow at residues 62-94 (RAAQ…KQNV), 341-372 (GFSH…GQNS), and 392-420 (NIHK…SSLS). Polar residues-rich tracts occupy residues 344–358 (HFSS…NTPT) and 392–407 (NIHK…SPYT).

This sequence belongs to the maelstrom family. Interacts with SMARCB1, SIN3B and DDX4. Interacts with piRNA-associated proteins TDRD1, PIWIL1 and PIWIL2. Interacts with TEX19.

It localises to the cytoplasm. The protein resides in the nucleus. Its function is as follows. Plays a central role during spermatogenesis by repressing transposable elements and preventing their mobilization, which is essential for the germline integrity. Acts via the piRNA metabolic process, which mediates the repression of transposable elements during meiosis by forming complexes composed of piRNAs and Piwi proteins and governs the methylation and subsequent repression of transposons. Its association with piP-bodies suggests a participation in the secondary piRNAs metabolic process. Required for the localization of germ-cell factors to the meiotic nuage. The polypeptide is Protein maelstrom homolog (MAEL) (Bos taurus (Bovine)).